Reading from the N-terminus, the 917-residue chain is Probable dipeptidyl-aminopeptidase B (917 aa).

Residues 1 to 16 are compositionally biased toward basic and acidic residues; the sequence is MATEKGHGRDDEERVP. The interval 1–21 is disordered; sequence MATEKGHGRDDEERVPLTRGS. Residues 1 to 99 are Cytoplasmic-facing; it reads MATEKGHGRD…KPMHKSVKIA (99 aa). The chain crosses the membrane as a helical; Signal-anchor for type II membrane protein span at residues 100 to 120; that stretch reads LWTLLFLSLGGWSLAFVLFIF. Topologically, residues 121 to 917 are vacuolar; sequence RSHDTYETPI…RAATWAGLSI (797 aa). Asparagine 135, asparagine 351, and asparagine 574 each carry an N-linked (GlcNAc...) asparagine glycan. Serine 756 functions as the Charge relay system in the catalytic mechanism. An N-linked (GlcNAc...) asparagine glycan is attached at asparagine 815. Residues aspartate 833 and histidine 866 each act as charge relay system in the active site. A glycan (N-linked (GlcNAc...) asparagine) is linked at asparagine 902.

The protein belongs to the peptidase S9B family.

The protein resides in the vacuole membrane. It carries out the reaction Release of an N-terminal dipeptide, Xaa-Yaa-|-Zaa-, from a polypeptide, preferentially when Yaa is Pro, provided Zaa is neither Pro nor hydroxyproline.. Its function is as follows. Type IV dipeptidyl-peptidase which removes N-terminal dipeptides sequentially from polypeptides having unsubstituted N-termini provided that the penultimate residue is proline. This chain is Probable dipeptidyl-aminopeptidase B (DAPB), found in Ajellomyces capsulatus (strain H88) (Darling's disease fungus).